A 298-amino-acid polypeptide reads, in one-letter code: Tyrosine recombinase XerC (298 aa).

Positions 2–88 constitute a Core-binding (CB) domain; that stretch reads TDLHTDVERY…ALRSFFDWLV (87 aa). A Tyr recombinase domain is found at 109 to 288; that stretch reads HLPKNIDVDD…DFQHLASVYD (180 aa). Residues Arg148, Lys172, His240, Arg243, and His266 contribute to the active site. Tyr275 acts as the O-(3'-phospho-DNA)-tyrosine intermediate in catalysis.

The protein belongs to the 'phage' integrase family. XerC subfamily. In terms of assembly, forms a cyclic heterotetrameric complex composed of two molecules of XerC and two molecules of XerD, in which XerC interacts with XerD via its C-terminal region, XerD interacts with XerC via its C-terminal region and so on.

The protein resides in the cytoplasm. With respect to regulation, ftsK may regulate the catalytic switch between XerC and XerD in the heterotetrameric complex during the two steps of the recombination process. Site-specific tyrosine recombinase, which acts by catalyzing the cutting and rejoining of the recombining DNA molecules. Binds cooperatively to specific DNA consensus sequences that are separated from XerD binding sites by a short central region, forming the heterotetrameric XerC-XerD complex that recombines DNA substrates. The complex is essential to convert dimers of the bacterial chromosome into monomers to permit their segregation at cell division. It also contributes to the segregational stability of plasmids. In the complex XerC specifically exchanges the top DNA strands. The chain is Tyrosine recombinase XerC from Escherichia coli O6:K15:H31 (strain 536 / UPEC).